A 1057-amino-acid polypeptide reads, in one-letter code: Carbamoyl phosphate synthase large chain (1057 aa).

The tract at residues 1–401 (MPKRQDIETI…SLLKAIRSLE (401 aa)) is carboxyphosphate synthetic domain. Residues arginine 129, arginine 169, glycine 175, glycine 176, lysine 208, isoleucine 210, glutamate 215, glycine 241, isoleucine 242, histidine 243, glutamine 284, and glutamate 298 each contribute to the ATP site. Residues 133-327 (RTLMNDLGVP…IAKLAAKIAI (195 aa)) enclose the ATP-grasp 1 domain. Mg(2+) contacts are provided by glutamine 284, glutamate 298, and asparagine 300. Glutamine 284, glutamate 298, and asparagine 300 together coordinate Mn(2+). The tract at residues 402 to 546 (YGVHHLGLPN…YGTYEYENES (145 aa)) is oligomerization domain. Positions 547 to 929 (VVTEKEKILV…ALFKGLTASG (383 aa)) are carbamoyl phosphate synthetic domain. The 191-residue stretch at 671-861 (EALLHTIDVP…MAQLAMRAII (191 aa)) folds into the ATP-grasp 2 domain. The ATP site is built by arginine 707, arginine 746, leucine 748, glutamate 752, glycine 777, valine 778, histidine 779, serine 780, glutamine 820, and glutamate 832. Residues glutamine 820, glutamate 832, and asparagine 834 each coordinate Mg(2+). Positions 820, 832, and 834 each coordinate Mn(2+). The 128-residue stretch at 930–1057 (MEVKDHGTVL…ESMTFTMKNM (128 aa)) folds into the MGS-like domain. An allosteric domain region spans residues 930–1057 (MEVKDHGTVL…ESMTFTMKNM (128 aa)).

Belongs to the CarB family. As to quaternary structure, composed of two chains; the small (or glutamine) chain promotes the hydrolysis of glutamine to ammonia, which is used by the large (or ammonia) chain to synthesize carbamoyl phosphate. Tetramer of heterodimers (alpha,beta)4. It depends on Mg(2+) as a cofactor. Requires Mn(2+) as cofactor.

It catalyses the reaction hydrogencarbonate + L-glutamine + 2 ATP + H2O = carbamoyl phosphate + L-glutamate + 2 ADP + phosphate + 2 H(+). The catalysed reaction is hydrogencarbonate + NH4(+) + 2 ATP = carbamoyl phosphate + 2 ADP + phosphate + 2 H(+). It functions in the pathway amino-acid biosynthesis; L-arginine biosynthesis; carbamoyl phosphate from bicarbonate: step 1/1. The protein operates within pyrimidine metabolism; UMP biosynthesis via de novo pathway; (S)-dihydroorotate from bicarbonate: step 1/3. Large subunit of the glutamine-dependent carbamoyl phosphate synthetase (CPSase). CPSase catalyzes the formation of carbamoyl phosphate from the ammonia moiety of glutamine, carbonate, and phosphate donated by ATP, constituting the first step of 2 biosynthetic pathways, one leading to arginine and/or urea and the other to pyrimidine nucleotides. The large subunit (synthetase) binds the substrates ammonia (free or transferred from glutamine from the small subunit), hydrogencarbonate and ATP and carries out an ATP-coupled ligase reaction, activating hydrogencarbonate by forming carboxy phosphate which reacts with ammonia to form carbamoyl phosphate. In Staphylococcus saprophyticus subsp. saprophyticus (strain ATCC 15305 / DSM 20229 / NCIMB 8711 / NCTC 7292 / S-41), this protein is Carbamoyl phosphate synthase large chain.